The sequence spans 571 residues: Proline--tRNA ligase (571 aa).

The protein belongs to the class-II aminoacyl-tRNA synthetase family. ProS type 1 subfamily. Homodimer.

It is found in the cytoplasm. The catalysed reaction is tRNA(Pro) + L-proline + ATP = L-prolyl-tRNA(Pro) + AMP + diphosphate. In terms of biological role, catalyzes the attachment of proline to tRNA(Pro) in a two-step reaction: proline is first activated by ATP to form Pro-AMP and then transferred to the acceptor end of tRNA(Pro). As ProRS can inadvertently accommodate and process non-cognate amino acids such as alanine and cysteine, to avoid such errors it has two additional distinct editing activities against alanine. One activity is designated as 'pretransfer' editing and involves the tRNA(Pro)-independent hydrolysis of activated Ala-AMP. The other activity is designated 'posttransfer' editing and involves deacylation of mischarged Ala-tRNA(Pro). The misacylated Cys-tRNA(Pro) is not edited by ProRS. The chain is Proline--tRNA ligase from Actinobacillus pleuropneumoniae serotype 5b (strain L20).